We begin with the raw amino-acid sequence, 289 residues long: Oxaloacetate decarboxylase 1 (289 aa).

Ser50 is a substrate binding site. Asp88 is a binding site for Mg(2+). Substrate-binding residues include Arg159 and His235.

Belongs to the isocitrate lyase/PEP mutase superfamily. Oxaloacetate decarboxylase family. In terms of assembly, homotetramer; dimer of dimers. Mg(2+) is required as a cofactor.

The enzyme catalyses oxaloacetate + H(+) = pyruvate + CO2. Its function is as follows. Catalyzes the decarboxylation of oxaloacetate into pyruvate. Seems to play a role in maintaining cellular concentrations of bicarbonate and pyruvate. This is Oxaloacetate decarboxylase 1 from Pseudomonas fluorescens (strain Pf0-1).